Reading from the N-terminus, the 373-residue chain is Leucine-, isoleucine-, valine-, threonine-, and alanine-binding protein (373 aa).

The N-terminal stretch at 1 to 26 (MKKGTQRLSRLFAAMAIAGFASYSMA) is a signal peptide. The cysteines at positions 80 and 105 are disulfide-linked.

This sequence belongs to the leucine-binding protein family.

It localises to the periplasm. Functionally, component of the high-affinity leucine, isoleucine, valine transport system I (LIV-I), which is operative without Na(+) and is specific for alanine and threonine, in addition to branched-chain amino acids. Binds L-leucine, L-isoleucine, L-valine, L-threonine and L-alanine with nanomolar affinities. Can also bind L-homoserine with high affinity. In Pseudomonas aeruginosa (strain ATCC 15692 / DSM 22644 / CIP 104116 / JCM 14847 / LMG 12228 / 1C / PRS 101 / PAO1), this protein is Leucine-, isoleucine-, valine-, threonine-, and alanine-binding protein (braC).